The following is a 125-amino-acid chain: Large ribosomal subunit protein bL12 (125 aa).

Belongs to the bacterial ribosomal protein bL12 family. In terms of assembly, homodimer. Part of the ribosomal stalk of the 50S ribosomal subunit. Forms a multimeric L10(L12)X complex, where L10 forms an elongated spine to which 2 to 4 L12 dimers bind in a sequential fashion. Binds GTP-bound translation factors.

In terms of biological role, forms part of the ribosomal stalk which helps the ribosome interact with GTP-bound translation factors. Is thus essential for accurate translation. The polypeptide is Large ribosomal subunit protein bL12 (Chlorobium limicola (strain DSM 245 / NBRC 103803 / 6330)).